A 75-amino-acid chain; its full sequence is RNA-binding protein Hfq (75 aa).

Residues 9–69 (DQFLNQLRKE…ISTFAPERNI (61 aa)) form the Sm domain.

This sequence belongs to the Hfq family. As to quaternary structure, homohexamer.

Its function is as follows. RNA chaperone that binds small regulatory RNA (sRNAs) and mRNAs to facilitate mRNA translational regulation in response to envelope stress, environmental stress and changes in metabolite concentrations. Also binds with high specificity to tRNAs. The polypeptide is RNA-binding protein Hfq (Geobacillus kaustophilus (strain HTA426)).